Here is a 113-residue protein sequence, read N- to C-terminus: Defense protein 2 (113 aa).

The protein belongs to the attacin/sarcotoxin-2 family.

It is found in the secreted. In terms of biological role, has antibacterial activity against both Gram-positive and Gram-negative bacteria. This chain is Defense protein 2, found in Lonomia obliqua (Moth).